The primary structure comprises 264 residues: Cell division protein FtsQ (264 aa).

Residues 1 to 24 are disordered; sequence MAGPTTAERGDRQQESSGPPPARW. The Cytoplasmic portion of the chain corresponds to 1 to 31; sequence MAGPTTAERGDRQQESSGPPPARWSGTRRLR. The helical transmembrane segment at 32–52 threads the bilayer; the sequence is ALVVLAALLVLLAGGCAWLLY. Topologically, residues 53 to 264 are extracellular; the sequence is GSSWLRLERV…VPTAPASSGS (212 aa). Residues 57-126 enclose the POTRA domain; it reads LRLERVSVSG…HGIGLKVTER (70 aa).

The protein belongs to the FtsQ/DivIB family. FtsQ subfamily.

It localises to the cell membrane. In terms of biological role, essential cell division protein. In Streptomyces collinus, this protein is Cell division protein FtsQ.